The chain runs to 145 residues: Ribosome-binding factor A (145 aa).

The tract at residues 126–145 is disordered; that stretch reads RDLDTETDAEAGSETTKEED. A compositionally biased stretch (acidic residues) spans 130-145; it reads TETDAEAGSETTKEED.

It belongs to the RbfA family. Monomer. Binds 30S ribosomal subunits, but not 50S ribosomal subunits or 70S ribosomes.

It localises to the cytoplasm. Functionally, one of several proteins that assist in the late maturation steps of the functional core of the 30S ribosomal subunit. Associates with free 30S ribosomal subunits (but not with 30S subunits that are part of 70S ribosomes or polysomes). Required for efficient processing of 16S rRNA. May interact with the 5'-terminal helix region of 16S rRNA. The sequence is that of Ribosome-binding factor A from Azorhizobium caulinodans (strain ATCC 43989 / DSM 5975 / JCM 20966 / LMG 6465 / NBRC 14845 / NCIMB 13405 / ORS 571).